A 402-amino-acid polypeptide reads, in one-letter code: Putative RNA-guided DNA endonuclease InsQ (402 aa).

Active-site residues include Asp-183 and Glu-267. Residues Cys-334, Cys-337, Cys-353, and Cys-356 each contribute to the Zn(2+) site. Asp-363 is a catalytic residue.

In the N-terminal section; belongs to the transposase 2 family. The protein in the C-terminal section; belongs to the transposase 35 family.

An RNA-guided dsDNA endonuclease. When guided by an RNA derived from the right-end element of its insertion sequence element (IS), cleaves DNA downstream of the transposon-associated motif (TAM). Cleaves supercoiled and linear DNA in a staggered manner 15-21 bases from the TAM yielding 5'-overhangs. Binds reRNA, an approximately 150 nucleotide base sRNA derived from the 3' end of its own gene, the right end (RE) of the insertion sequence (IS) plus sequence downstream of the IS. In terms of biological role, not required for transposition of the insertion element. The corresponding transposase in strains MG1655 and W3110 is a truncated pseudogene (yncK). This chain is Putative RNA-guided DNA endonuclease InsQ (insQ), found in Escherichia coli (strain K12).